Consider the following 155-residue polypeptide: Ribonuclease H (155 aa).

An RNase H type-1 domain is found at Met1 to Met142. Positions 10, 48, 70, and 134 each coordinate Mg(2+).

This sequence belongs to the RNase H family. Monomer. It depends on Mg(2+) as a cofactor.

It is found in the cytoplasm. It catalyses the reaction Endonucleolytic cleavage to 5'-phosphomonoester.. In terms of biological role, endonuclease that specifically degrades the RNA of RNA-DNA hybrids. The protein is Ribonuclease H of Escherichia fergusonii (strain ATCC 35469 / DSM 13698 / CCUG 18766 / IAM 14443 / JCM 21226 / LMG 7866 / NBRC 102419 / NCTC 12128 / CDC 0568-73).